Here is a 105-residue protein sequence, read N- to C-terminus: UPF0251 protein AF_0666 (105 aa).

It belongs to the UPF0251 family.

The sequence is that of UPF0251 protein AF_0666 from Archaeoglobus fulgidus (strain ATCC 49558 / DSM 4304 / JCM 9628 / NBRC 100126 / VC-16).